The sequence spans 211 residues: uncharacterized protein (211 aa).

A disordered region spans residues 187–211 (LKVSEQENSEAPVSEPKEDEKTKKD). Residues 201-211 (EPKEDEKTKKD) show a composition bias toward basic and acidic residues.

This is an uncharacterized protein from Spiroplasma citri.